We begin with the raw amino-acid sequence, 214 residues long: Probable transaldolase (214 aa).

Lys83 acts as the Schiff-base intermediate with substrate in catalysis.

The protein belongs to the transaldolase family. Type 3B subfamily.

It localises to the cytoplasm. The enzyme catalyses D-sedoheptulose 7-phosphate + D-glyceraldehyde 3-phosphate = D-erythrose 4-phosphate + beta-D-fructose 6-phosphate. Its pathway is carbohydrate degradation; pentose phosphate pathway; D-glyceraldehyde 3-phosphate and beta-D-fructose 6-phosphate from D-ribose 5-phosphate and D-xylulose 5-phosphate (non-oxidative stage): step 2/3. Its function is as follows. Transaldolase is important for the balance of metabolites in the pentose-phosphate pathway. The chain is Probable transaldolase from Geobacter metallireducens (strain ATCC 53774 / DSM 7210 / GS-15).